A 1203-amino-acid polypeptide reads, in one-letter code: Cingulin (1203 aa).

The interval 7-357 is head; it reads MAEPRGPVDH…VMVSSGSTKA (351 aa). The tract at residues 25-48 is disordered; the sequence is EPVSGAEMGTLRRGGRRPAKDARA. Residues 48–62 carry the ZIM motif; it reads ASTYGVAVRVQGIAG. The interval 54 to 67 is interaction with TJP1/ZO1; that stretch reads AVRVQGIAGQPFVV. The interval 89 to 127 is disordered; the sequence is GASGALSSDLELPENPYSQVKGFPAPSQSSTSDEEPGAY. 13 positions are modified to phosphoserine: Ser-95, Ser-96, Ser-135, Ser-137, Ser-140, Ser-155, Ser-165, Ser-214, Ser-217, Ser-258, Ser-276, Ser-338, and Ser-351. The interval 186 to 266 is disordered; it reads DSQLGGQARG…LSPLSGFSRS (81 aa). Residues 207-231 are compositionally biased toward basic and acidic residues; that stretch reads EQRKRSKSLDSRLPRDTFEERERQS. Over residues 232–266 the composition is skewed to polar residues; that stretch reads TNHWTSSTKYDNHVGTSKQPAQSQNLSPLSGFSRS. The stretch at 358–1160 forms a coiled coil; it reads VAGQGELTRK…SLEKDSWRKA (803 aa). An N6-acetyllysine modification is found at Lys-579. Position 712 is a phosphothreonine (Thr-712). Disordered stretches follow at residues 1034–1053 and 1154–1181; these read LASSEGFQKPSASLSQLESQ and KDSWRKASRSAAESALKNEGLSSDEEFD. Residues 1044–1053 are compositionally biased toward low complexity; it reads SASLSQLESQ. Residues 1161–1203 form a tail region; that stretch reads SRSAAESALKNEGLSSDEEFDSVYDPSSIASLLTESNLQTSSC. 3 positions are modified to phosphoserine: Ser-1175, Ser-1176, and Ser-1182.

Belongs to the cingulin family. Homodimer. Interacts with TJP1/ZO1. Interacts with SPEF1. As to expression, localized on the cytoplasmic face of tight junctions of polarized epithelia and some endothelia. Expressed in pancreas, kidney, liver and lung, but not in skeletal muscle, placenta, brain or heart.

The protein resides in the cell junction. It is found in the tight junction. Probably plays a role in the formation and regulation of the tight junction (TJ) paracellular permeability barrier. This chain is Cingulin, found in Homo sapiens (Human).